The following is a 253-amino-acid chain: 2-C-methyl-D-erythritol 4-phosphate cytidylyltransferase (253 aa).

The interval 1-28 (MSVSSRPGRRRFALIPSAGTGTRAGGDL) is disordered.

Belongs to the IspD/TarI cytidylyltransferase family. IspD subfamily.

It catalyses the reaction 2-C-methyl-D-erythritol 4-phosphate + CTP + H(+) = 4-CDP-2-C-methyl-D-erythritol + diphosphate. The protein operates within isoprenoid biosynthesis; isopentenyl diphosphate biosynthesis via DXP pathway; isopentenyl diphosphate from 1-deoxy-D-xylulose 5-phosphate: step 2/6. Its function is as follows. Catalyzes the formation of 4-diphosphocytidyl-2-C-methyl-D-erythritol from CTP and 2-C-methyl-D-erythritol 4-phosphate (MEP). This Ralstonia nicotianae (strain ATCC BAA-1114 / GMI1000) (Ralstonia solanacearum) protein is 2-C-methyl-D-erythritol 4-phosphate cytidylyltransferase.